The chain runs to 247 residues: Inhibitory synaptic factor 1 (247 aa).

A coiled-coil region spans residues 30 to 65 (RAVIGQLEGILRDLKEVAKELKEVVEQIDRLTSDFE). Disordered regions lie at residues 69–90 (DTDD…GGPL), 112–166 (ASTP…RDRV), and 180–217 (DDSE…GVRK). Residues 76-85 (GTVSSTSSSE) show a composition bias toward polar residues.

Belongs to the INSYN1 family.

The protein resides in the postsynaptic density. Its function is as follows. May be a component of the protein machinery at the inhibitory synapses, probably acting as a scaffold. The polypeptide is Inhibitory synaptic factor 1 (Xenopus laevis (African clawed frog)).